The following is a 1768-amino-acid chain: Maestro heat-like repeat-containing protein family member 1 homolog (1768 aa).

HEAT repeat units follow at residues 4 to 47 (TSQV…HQPN), 164 to 203 (VHNP…AICS), 816 to 856 (QRLQ…AVHP), 1166 to 1204 (QSQM…ARGA), 1483 to 1521 (EQLL…CSST), and 1731 to 1768 (TISR…HDFH).

Belongs to the MROH1 family. Homooligomer; homooligomerizes at lysosome scission sites.

It localises to the lysosome membrane. Functionally, lysosome fission factor. Recruited to lysosomes by rab-7 at scission sites and homooligomerizes to mediate the constriction and scission of lysosomal tubules. May sever membranes by inserting amphipathic helices into one bilayer leaflet. Lysosome fission is required to maintain their steady-state number, shape, size, composition and function, and to accomplish regeneration. In Caenorhabditis elegans, this protein is Maestro heat-like repeat-containing protein family member 1 homolog.